The primary structure comprises 460 residues: Nucleosome assembly protein 1-like 2 (460 aa).

Basic and acidic residues-rich tracts occupy residues 1-11 (MAESENRKELS) and 27-36 (LGEHLERGED). 2 disordered regions span residues 1–88 (MAES…ADRP) and 214–238 (EEEEEEEEDDIEATGEENKEEEDPK). Over residues 214 to 236 (EEEEEEEEDDIEATGEENKEEED) the composition is skewed to acidic residues. A Nuclear localization signal motif is present at residues 346-352 (IKKKQKH).

The protein belongs to the nucleosome assembly protein (NAP) family.

Its subcellular location is the nucleus. In terms of biological role, acidic protein which may be involved in interactions with other proteins or DNA. This chain is Nucleosome assembly protein 1-like 2 (NAP1L2), found in Homo sapiens (Human).